A 327-amino-acid polypeptide reads, in one-letter code: L-serine dehydratase/L-threonine deaminase (327 aa).

A2 bears the N-acetylalanine mark. K41 is modified (N6-(pyridoxal phosphate)lysine). P128 is a binding site for pyridoxal 5'-phosphate.

This sequence belongs to the serine/threonine dehydratase family. In terms of assembly, homodimer. Requires pyridoxal 5'-phosphate as cofactor.

It localises to the cytoplasm. It catalyses the reaction L-serine = pyruvate + NH4(+). The catalysed reaction is L-threonine = 2-oxobutanoate + NH4(+). It functions in the pathway carbohydrate biosynthesis; gluconeogenesis. In terms of biological role, catalyzes the pyridoxal-phosphate-dependent dehydrative deamination of L-threonine and L-serine to ammonia and alpha-ketobutyrate and pyruvate, respectively. The polypeptide is L-serine dehydratase/L-threonine deaminase (Sds) (Mus musculus (Mouse)).